The sequence spans 376 residues: Chaperone protein DnaJ (376 aa).

A J domain is found at 5 to 70 (DYYEVLGVAR…QKRAAYDQFG (66 aa)). The segment at 134 to 212 (GTSVKIKVPT…CHGHGRVEET (79 aa)) adopts a CR-type zinc-finger fold. Positions 147, 150, 164, 167, 186, 189, 200, and 203 each coordinate Zn(2+). 4 CXXCXGXG motif repeats span residues 147 to 154 (CTNCGGSG), 164 to 171 (CNTCGGHG), 186 to 193 (CPTCRGQG), and 200 to 207 (CNKCHGHG).

Belongs to the DnaJ family. In terms of assembly, homodimer. Requires Zn(2+) as cofactor.

It is found in the cytoplasm. Its function is as follows. Participates actively in the response to hyperosmotic and heat shock by preventing the aggregation of stress-denatured proteins and by disaggregating proteins, also in an autonomous, DnaK-independent fashion. Unfolded proteins bind initially to DnaJ; upon interaction with the DnaJ-bound protein, DnaK hydrolyzes its bound ATP, resulting in the formation of a stable complex. GrpE releases ADP from DnaK; ATP binding to DnaK triggers the release of the substrate protein, thus completing the reaction cycle. Several rounds of ATP-dependent interactions between DnaJ, DnaK and GrpE are required for fully efficient folding. Also involved, together with DnaK and GrpE, in the DNA replication of plasmids through activation of initiation proteins. This Teredinibacter turnerae (strain ATCC 39867 / T7901) protein is Chaperone protein DnaJ.